A 318-amino-acid polypeptide reads, in one-letter code: NADH-ubiquinone oxidoreductase chain 1 (318 aa).

8 consecutive transmembrane segments (helical) span residues 2-22 (FMIN…FLTL), 69-89 (FMFT…WVPL), 102-122 (MLFI…SGWA), 146-166 (LAII…STLT), 171-191 (HLWL…STLA), 231-251 (IIMM…NPLL), 253-273 (EAHT…FLWV), and 294-314 (LPLT…LACI).

It belongs to the complex I subunit 1 family. Core subunit of respiratory chain NADH dehydrogenase (Complex I) which is composed of 45 different subunits.

The protein resides in the mitochondrion inner membrane. It catalyses the reaction a ubiquinone + NADH + 5 H(+)(in) = a ubiquinol + NAD(+) + 4 H(+)(out). Core subunit of the mitochondrial membrane respiratory chain NADH dehydrogenase (Complex I) which catalyzes electron transfer from NADH through the respiratory chain, using ubiquinone as an electron acceptor. Essential for the catalytic activity and assembly of complex I. This Dugong dugon (Dugong) protein is NADH-ubiquinone oxidoreductase chain 1 (MT-ND1).